The primary structure comprises 316 residues: Epiphycan (316 aa).

An N-terminal signal peptide occupies residues 1 to 23 (MKTFVNIFLGFFIFESVGAVPIT). S98 carries an O-linked (Xyl...) (dermatan sulfate) serine glycan. The region spanning 100–137 (VLVPQTQDGLPTCLLCTCLGTTVYCDDRELDAVPPLPK) is the LRRNT domain. C112 and C124 are oxidised to a cystine. LRR repeat units follow at residues 138 to 159 (NTMYFYSRYNRIRKINKNDFAN), 162 to 183 (NLKRIDLTANLISEIHEDAFRR), 186 to 207 (QLLELVLRDNRIRQLPELPSTL), 232 to 252 (ELQHLYITDNNLDHVPLPLPE), 253 to 274 (SLQALHLQNNNIQEMHEDTFCK), and 284 to 304 (ALEDIRLDGNPINLSKTPYAY). A disulfide bond links C273 and C306. N296 is a glycosylation site (N-linked (GlcNAc...) asparagine).

It belongs to the small leucine-rich proteoglycan (SLRP) family. SLRP class III subfamily. In terms of processing, the O-linked glycosaminoglycan chain(s) are dermatan sulfate. Preferentially expressed in flattened chondrocytes of developing chick limb cartilage. Also found in the cartilage peripheral zone bordering with bone marrow cavity.

The protein resides in the secreted. It is found in the extracellular space. It localises to the extracellular matrix. In terms of biological role, may have a role in bone formation and also in establishing the ordered structure of cartilage through matrix organization. In Gallus gallus (Chicken), this protein is Epiphycan (EPYC).